Consider the following 268-residue polypeptide: uncharacterized protein (268 aa).

It belongs to the LarE family.

This is an uncharacterized protein from Synechocystis sp. (strain ATCC 27184 / PCC 6803 / Kazusa).